Here is a 491-residue protein sequence, read N- to C-terminus: Probable Xaa-Pro aminopeptidase AFLA_084750 (491 aa).

Asp-271, Asp-282, Glu-419, and Glu-458 together coordinate Mn(2+).

This sequence belongs to the peptidase M24B family. The cofactor is Mn(2+).

It carries out the reaction Release of any N-terminal amino acid, including proline, that is linked to proline, even from a dipeptide or tripeptide.. Functionally, catalyzes the removal of a penultimate prolyl residue from the N-termini of peptides. This is Probable Xaa-Pro aminopeptidase AFLA_084750 from Aspergillus flavus (strain ATCC 200026 / FGSC A1120 / IAM 13836 / NRRL 3357 / JCM 12722 / SRRC 167).